The sequence spans 82 residues: Putative membrane protein insertion efficiency factor (82 aa).

Belongs to the UPF0161 family.

The protein localises to the cell membrane. Could be involved in insertion of integral membrane proteins into the membrane. The protein is Putative membrane protein insertion efficiency factor of Streptococcus uberis (strain ATCC BAA-854 / 0140J).